Reading from the N-terminus, the 293-residue chain is Ribosomal RNA small subunit methyltransferase H (293 aa).

Residues 32–34 (GGH), aspartate 51, phenylalanine 78, aspartate 99, and glutamine 106 contribute to the S-adenosyl-L-methionine site. Residues 274 to 293 (DEIRENPASRSAKMRVARRL) are disordered.

This sequence belongs to the methyltransferase superfamily. RsmH family.

The protein resides in the cytoplasm. The catalysed reaction is cytidine(1402) in 16S rRNA + S-adenosyl-L-methionine = N(4)-methylcytidine(1402) in 16S rRNA + S-adenosyl-L-homocysteine + H(+). Functionally, specifically methylates the N4 position of cytidine in position 1402 (C1402) of 16S rRNA. This is Ribosomal RNA small subunit methyltransferase H from Sulfurihydrogenibium azorense (strain DSM 15241 / OCM 825 / Az-Fu1).